The chain runs to 435 residues: Dual specificity protein kinase FUZ7 (435 aa).

The interval 1-61 (MLSSGAGSSI…TIGKSSAVTP (61 aa)) is disordered. Polar residues predominate over residues 46–59 (AASNASTIGKSSAV). Residues 109–417 (LKTLSELGAG…PKDLTKHQYV (309 aa)) form the Protein kinase domain. Residues 115–123 (LGAGNGGTV) and Lys-138 contribute to the ATP site. The active-site Proton acceptor is Asp-231. The tract at residues 307–359 (NEEDDDSDADNNYTNEDLAGTLSPTKPAPMISLGQNEKQRRRKSKPAGVSLEG) is disordered.

This sequence belongs to the protein kinase superfamily. STE Ser/Thr protein kinase family. MAP kinase kinase subfamily.

The catalysed reaction is L-seryl-[protein] + ATP = O-phospho-L-seryl-[protein] + ADP + H(+). It carries out the reaction L-threonyl-[protein] + ATP = O-phospho-L-threonyl-[protein] + ADP + H(+). The enzyme catalyses L-tyrosyl-[protein] + ATP = O-phospho-L-tyrosyl-[protein] + ADP + H(+). In terms of biological role, protein kinase that is necessary for a-locus-dependent processes, such as conjugation tube formation, filament formation, and maintenance of filamentous growth, and for a-locus-independent processes, such as tumor induction and teliospore germination. In Mycosarcoma maydis (Corn smut fungus), this protein is Dual specificity protein kinase FUZ7 (FUZ7).